Here is a 115-residue protein sequence, read N- to C-terminus: MKLTKEKKNDCLVGVSYIPPLNFFTLTFLFLLRIEKVHLSLSLSLSLSLRFYYFHNVCYPSLFLFFCFVIPFFYSVRFILLYLHILRSFYELNILLLYGAENSRRQSPPGYYVIR.

Over 1–11 (MKLTKEKKNDC) the chain is Cytoplasmic. A helical membrane pass occupies residues 12–32 (LVGVSYIPPLNFFTLTFLFLL). Over 33 to 52 (RIEKVHLSLSLSLSLSLRFY) the chain is Extracellular. The chain crosses the membrane as a helical span at residues 53-73 (YFHNVCYPSLFLFFCFVIPFF). At 74–78 (YSVRF) the chain is on the cytoplasmic side. A helical transmembrane segment spans residues 79 to 98 (ILLYLHILRSFYELNILLLY). At 99–115 (GAENSRRQSPPGYYVIR) the chain is on the extracellular side.

It localises to the membrane. This is an uncharacterized protein from Saccharomyces cerevisiae (strain ATCC 204508 / S288c) (Baker's yeast).